The chain runs to 147 residues: Peptide methionine sulfoxide reductase MsrB (147 aa).

The MsrB domain occupies 8 to 131 (KEELKKILTE…NSASLKFIPK (124 aa)). Residue Cys-120 is the Nucleophile of the active site.

It belongs to the MsrB Met sulfoxide reductase family.

The enzyme catalyses L-methionyl-[protein] + [thioredoxin]-disulfide + H2O = L-methionyl-(R)-S-oxide-[protein] + [thioredoxin]-dithiol. This Clostridium perfringens (strain SM101 / Type A) protein is Peptide methionine sulfoxide reductase MsrB.